Consider the following 248-residue polypeptide: Phosphomannomutase (248 aa).

D12 acts as the Nucleophile in catalysis. Positions 12 and 14 each coordinate Mg(2+). D14 acts as the Proton donor/acceptor in catalysis. R21, R123, R134, R141, S179, and D181 together coordinate alpha-D-mannose 1-phosphate. Residues D207, F219, and T224 each coordinate Mg(2+).

It belongs to the eukaryotic PMM family. In terms of assembly, homodimer. The cofactor is Mg(2+).

It is found in the cytoplasm. It catalyses the reaction alpha-D-mannose 1-phosphate = D-mannose 6-phosphate. It functions in the pathway nucleotide-sugar biosynthesis; GDP-alpha-D-mannose biosynthesis; alpha-D-mannose 1-phosphate from D-fructose 6-phosphate: step 2/2. In terms of biological role, catalyzes the interconversion of mannose-6-phosphate to mannose-1-phosphate, the precursor for the synthesis of GDP-mannose. GDP-mannose is an essential sugar nucleotide for the synthesis of D-mannose-containing cell wall polysaccharides (galactomannans and glucomannans), glycolipids, glycoproteins and the antioxidant L-ascorbate. The polypeptide is Phosphomannomutase (Spinacia oleracea (Spinach)).